A 401-amino-acid chain; its full sequence is Imidazolonepropionase (401 aa).

Positions 66 and 68 each coordinate Fe(3+). Histidine 66 and histidine 68 together coordinate Zn(2+). The 4-imidazolone-5-propanoate site is built by arginine 75, tyrosine 138, and histidine 171. Tyrosine 138 is an N-formimidoyl-L-glutamate binding site. Histidine 236 serves as a coordination point for Fe(3+). Histidine 236 contacts Zn(2+). Glutamine 239 is a binding site for 4-imidazolone-5-propanoate. A Fe(3+)-binding site is contributed by aspartate 311. Aspartate 311 contributes to the Zn(2+) binding site. 2 residues coordinate N-formimidoyl-L-glutamate: asparagine 313 and glycine 315. Threonine 316 serves as a coordination point for 4-imidazolone-5-propanoate.

This sequence belongs to the metallo-dependent hydrolases superfamily. HutI family. Zn(2+) is required as a cofactor. The cofactor is Fe(3+).

Its subcellular location is the cytoplasm. It carries out the reaction 4-imidazolone-5-propanoate + H2O = N-formimidoyl-L-glutamate. It functions in the pathway amino-acid degradation; L-histidine degradation into L-glutamate; N-formimidoyl-L-glutamate from L-histidine: step 3/3. Its function is as follows. Catalyzes the hydrolytic cleavage of the carbon-nitrogen bond in imidazolone-5-propanoate to yield N-formimidoyl-L-glutamate. It is the third step in the universal histidine degradation pathway. This is Imidazolonepropionase from Pseudomonas putida (strain ATCC 47054 / DSM 6125 / CFBP 8728 / NCIMB 11950 / KT2440).